Here is a 431-residue protein sequence, read N- to C-terminus: WD repeat-containing protein 18 (431 aa).

WD repeat units lie at residues 78–118 (VCPG…AILS), 119–158 (RHFQDLSCIKFTDDSSHFVSGGKDNLAFIWNLSSVVQLDS), 170–211 (RHSL…MLLS), 213–252 (LFDVGIMSVTFDPCEYFLFCGGSDGNIFQVSLCSTSLSRD), and 267–306 (GHRNLVTCLSVSMDGTVLLSGSNDETVRMWDVQSKQCIWT). The disordered stretch occupies residues 342 to 363 (HLNPSEQGDGTGTGGMSLRLGA).

The protein belongs to the WD repeat IPI3/WDR18 family. As to quaternary structure, component of the PELP1 complex, composed of at least PELP1, TEX10 and WDR18. The complex interacts with pre-60S ribosome particles.

The protein resides in the nucleus. The protein localises to the nucleolus. It is found in the nucleoplasm. Its subcellular location is the dynein axonemal particle. Functionally, involved in left-right determination through controlling the correct clustering and migration of dorsal forerunner cells (DFCs) and Kupffer's vesicle formation. Component of the PELP1 complex involved in the nucleolar steps of 28S rRNA maturation and the subsequent nucleoplasmic transit of the pre-60S ribosomal subunit. The chain is WD repeat-containing protein 18 (wdr18) from Danio rerio (Zebrafish).